Reading from the N-terminus, the 204-residue chain is Large ribosomal subunit protein eL15 (204 aa).

2 disordered regions span residues 71–91 and 159–182; these read RKRP…GVNQ and REMR…HYSQ. A compositionally biased stretch (basic residues) spans 159–174; that stretch reads REMRGKTSAGRKHRGL.

Belongs to the eukaryotic ribosomal protein eL15 family.

The protein is Large ribosomal subunit protein eL15 (RPL15) of Faxonius limosus (Spinycheek crayfish).